A 426-amino-acid polypeptide reads, in one-letter code: Probable M18 family aminopeptidase 2 (426 aa).

3 residues coordinate Zn(2+): H79, H156, and H399.

It belongs to the peptidase M18 family. Zn(2+) serves as cofactor.

The sequence is that of Probable M18 family aminopeptidase 2 (apeB) from Mycobacterium leprae (strain TN).